The sequence spans 55 residues: Large ribosomal subunit protein bL33 (55 aa).

This sequence belongs to the bacterial ribosomal protein bL33 family.

The sequence is that of Large ribosomal subunit protein bL33 from Gluconacetobacter diazotrophicus (strain ATCC 49037 / DSM 5601 / CCUG 37298 / CIP 103539 / LMG 7603 / PAl5).